The following is a 231-amino-acid chain: Flagellar L-ring protein (231 aa).

The N-terminal stretch at methionine 1 to glycine 18 is a signal peptide. A lipid anchor (N-palmitoyl cysteine) is attached at cysteine 19. Cysteine 19 carries the S-diacylglycerol cysteine lipid modification. Residues leucine 118–serine 141 form a disordered region.

It belongs to the FlgH family. As to quaternary structure, the basal body constitutes a major portion of the flagellar organelle and consists of four rings (L,P,S, and M) mounted on a central rod.

It localises to the cell outer membrane. It is found in the bacterial flagellum basal body. Functionally, assembles around the rod to form the L-ring and probably protects the motor/basal body from shearing forces during rotation. The chain is Flagellar L-ring protein from Pseudomonas paraeruginosa (strain DSM 24068 / PA7) (Pseudomonas aeruginosa (strain PA7)).